Here is a 574-residue protein sequence, read N- to C-terminus: Cytochrome P450 4g15 (574 aa).

Positions 288–327 are disordered; sequence REREQNGGVDQTPSTAGSDEKDREKDKEKASPVAGLSYGQ. The segment covering 295-304 has biased composition (polar residues); it reads GVDQTPSTAG. The segment covering 305-317 has biased composition (basic and acidic residues); the sequence is SDEKDREKDKEKA. 2 residues coordinate heme: glutamate 379 and cysteine 519.

Belongs to the cytochrome P450 family. Requires heme as cofactor. As to expression, expressed in larval brain cortex cells and ring glands and weakly in larval digestive system and adult nervous system.

The protein resides in the endoplasmic reticulum membrane. It is found in the microsome membrane. Probably involved in steroid hormones biosynthesis. This Drosophila melanogaster (Fruit fly) protein is Cytochrome P450 4g15 (Cyp4g15).